The chain runs to 1067 residues: FHIP family protein GL19323 (1067 aa).

The span at 1-11 shows a compositional bias: polar residues; sequence MSWLRSSPLRQ. Disordered regions lie at residues 1-31, 503-525, and 832-1013; these read MSWLRSSPLRQSGNGGGGGVSTGHSSTGSLR, LARPKSVHEQQPPSGATGEQPIQ, and NENS…SEPA. Residues S508 and S835 each carry the phosphoserine modification. Residues 842–858 show a composition bias toward low complexity; it reads QPQTTLSQQQQQQQGQQ. Residues 859-878 are compositionally biased toward polar residues; that stretch reads RSAYATLSAATPVQATQTSA. Low complexity predominate over residues 893-904; it reads SKSISSMFSRRS. The segment covering 918-949 has biased composition (polar residues); the sequence is LVGNNNSGSGQSQPFSSTGTGTCETSLSTNPQ. Residues 950 to 979 are compositionally biased toward low complexity; that stretch reads SGAAAARSTGTATTANGNSSNSNISIGGST. The segment covering 980-996 has biased composition (polar residues); the sequence is QTLSGHSNTTTYSSSTL.

Belongs to the FHIP family.

In Drosophila persimilis (Fruit fly), this protein is FHIP family protein GL19323.